We begin with the raw amino-acid sequence, 383 residues long: Lipid-A-disaccharide synthase (383 aa).

Belongs to the LpxB family.

The catalysed reaction is a lipid X + a UDP-2-N,3-O-bis[(3R)-3-hydroxyacyl]-alpha-D-glucosamine = a lipid A disaccharide + UDP + H(+). It functions in the pathway bacterial outer membrane biogenesis; LPS lipid A biosynthesis. Functionally, condensation of UDP-2,3-diacylglucosamine and 2,3-diacylglucosamine-1-phosphate to form lipid A disaccharide, a precursor of lipid A, a phosphorylated glycolipid that anchors the lipopolysaccharide to the outer membrane of the cell. The chain is Lipid-A-disaccharide synthase from Anaeromyxobacter dehalogenans (strain 2CP-1 / ATCC BAA-258).